Reading from the N-terminus, the 1187-residue chain is RNA helicase Mov10l1 (1187 aa).

Residues 273 to 347 (RSKSCPGAAA…EPEPGGLIPP (75 aa)) form a disordered region. Basic and acidic residues-rich tracts occupy residues 296–307 (HHREDKTDEIPE) and 322–339 (ACKE…KQEP). 5 tandem repeats follow at residues 642–652 (TRNDSQSITNI), 653–663 (IRNDGQSITNV), 664–674 (TRNDGQPITKV), 675–685 (TRNNSQSITNI), and 686–696 (TRNDGQPITKN). The segment at 642–696 (TRNDSQSITNIIRNDGQSITNVTRNDGQPITKVTRNNSQSITNITRNDGQPITKN) is 5 X 11 AA tandem repeats of [TI]-R-N-[DN]-[GS]-Q-[SP]-I-T-[NK]-[IVN]. Residues 686–727 (TRNDGQPITKNKKTVKDQTKHTTEERHVGTTDQPEKASSTAE) form a disordered region. Basic and acidic residues predominate over residues 699-720 (TVKDQTKHTTEERHVGTTDQPE). 772–779 (GPPGTGKT) contributes to the ATP binding site. A DEAG box motif is present at residues 888–891 (DEAG).

Belongs to the DNA2/NAM7 helicase family. SDE3 subfamily. In terms of assembly, interacts with PIWIL1. Interacts with PIWIL2. Interacts with PIWIL4. Interacts with HSPA2. Interacts with PLD6. Isoform 1: Specifically expressed in testis. Isoform 1: In testis, present in pachytene spermatocytes but absent in postmeiotic spermatids (at protein level). Isoform 2: Present in cardiomyocytes (at protein level). Isoform 2: Heart specific. Isoform 3: Heart specific and is specifically expressed in cardiac myocytes.

The protein resides in the cytoplasm. It carries out the reaction ATP + H2O = ADP + phosphate + H(+). Its function is as follows. ATP-dependent RNA helicase required during spermatogenesis to repress transposable elements and prevent their mobilization, which is essential for germline integrity. Acts via the piRNA metabolic process, which mediates the repression of transposable elements during meiosis by forming complexes composed of piRNAs and Piwi proteins and governs the methylation and subsequent repression of transposons. Involved in the primary piRNA metabolic process. Specifically binds to piRNA precursors and promotes the generation of intermediate piRNA processing fragments that are subsequently loaded to Piwi proteins. Acts via its ATP-dependent RNA helicase activity: displays 5'-3' RNA unwinding activity and probably mediates unwinding and funneling of single-stranded piRNA precursor transcripts to the endonuclease that catalyzes the first cleavage step of piRNA processing to generate piRNA intermediate fragments that are subsequently loaded to Piwi proteins. May act downstream of MEF2C during heart formation. Acts as a cardiac-specific suppressor of cardiomyocyte hypertrophy and cell cycle progression, suggesting that it may suppress these processes through the regulation of CDKN1A. Such results however require additional evidence. The sequence is that of RNA helicase Mov10l1 from Mus musculus (Mouse).